Here is a 412-residue protein sequence, read N- to C-terminus: Argininosuccinate synthase (412 aa).

10–18 serves as a coordination point for ATP; it reads AYSGGLDTS. Residue Tyr89 coordinates L-citrulline. Gly119 serves as a coordination point for ATP. L-aspartate is bound by residues Thr121, Asn125, and Asp126. Asn125 is a binding site for L-citrulline. The L-citrulline site is built by Arg129, Ser177, Glu261, and Tyr273.

It belongs to the argininosuccinate synthase family. Type 1 subfamily. In terms of assembly, homotetramer.

It is found in the cytoplasm. The catalysed reaction is L-citrulline + L-aspartate + ATP = 2-(N(omega)-L-arginino)succinate + AMP + diphosphate + H(+). It participates in amino-acid biosynthesis; L-arginine biosynthesis; L-arginine from L-ornithine and carbamoyl phosphate: step 2/3. In Bifidobacterium longum subsp. infantis (strain ATCC 15697 / DSM 20088 / JCM 1222 / NCTC 11817 / S12), this protein is Argininosuccinate synthase.